We begin with the raw amino-acid sequence, 99 residues long: Nucleoid-associated protein Cj1642 (99 aa).

Belongs to the YbaB/EbfC family. Homodimer.

The protein resides in the cytoplasm. It localises to the nucleoid. In terms of biological role, binds to DNA and alters its conformation. May be involved in regulation of gene expression, nucleoid organization and DNA protection. The chain is Nucleoid-associated protein Cj1642 from Campylobacter jejuni subsp. jejuni serotype O:2 (strain ATCC 700819 / NCTC 11168).